We begin with the raw amino-acid sequence, 387 residues long: MKKVSVLGSTGSVGKKTVDLLSKRKEEYQVEALSAHSNFALLAHQAKLLNAKYVAISDERLYKDLKESLLGTDVKIAIGATNVAAIPVDLSVVAIVGIAGLGPVMEVIESGTKVIALANKESIVCGGKLLLKKAKEKNVQIIPIDSEHNAIFQILQNDDKCVEKIILTASGGPFLNYSLEQLRNIMVDQALSHPTWNMGKKISVDSATMMNKALEIIEAHNLFNISPDKIEAVVHPESIVHGIVTYKDGFNFAVLAETDMAIPISYALSWPERLVLNYKLDLTKQGKLTFQEPDHKHFPVLKLSMEVLNSSTPQTNSIVLNAANEIAVNEFLKSRIGFLEIVEVVESTMESFGSYTDINSLSDIINIDCESRIIAHKIVESKVVAYS.

Residues Thr-10, Gly-11, Ser-12, Val-13, Asn-38, and Asn-119 each contribute to the NADPH site. Lys-120 lines the 1-deoxy-D-xylulose 5-phosphate pocket. Glu-121 serves as a coordination point for NADPH. Residue Asp-145 coordinates Mn(2+). Ser-146, Glu-147, Ser-170, and His-193 together coordinate 1-deoxy-D-xylulose 5-phosphate. Glu-147 lines the Mn(2+) pocket. Gly-199 contributes to the NADPH binding site. 1-deoxy-D-xylulose 5-phosphate-binding residues include Ser-206, Asn-211, Lys-212, and Glu-215. Glu-215 is a Mn(2+) binding site.

This sequence belongs to the DXR family. It depends on Mg(2+) as a cofactor. The cofactor is Mn(2+).

The enzyme catalyses 2-C-methyl-D-erythritol 4-phosphate + NADP(+) = 1-deoxy-D-xylulose 5-phosphate + NADPH + H(+). It participates in isoprenoid biosynthesis; isopentenyl diphosphate biosynthesis via DXP pathway; isopentenyl diphosphate from 1-deoxy-D-xylulose 5-phosphate: step 1/6. Catalyzes the NADPH-dependent rearrangement and reduction of 1-deoxy-D-xylulose-5-phosphate (DXP) to 2-C-methyl-D-erythritol 4-phosphate (MEP). The chain is 1-deoxy-D-xylulose 5-phosphate reductoisomerase from Wolbachia sp. subsp. Drosophila simulans (strain wRi).